The primary structure comprises 436 residues: Ribulose bisphosphate carboxylase large chain (436 aa).

The substrate site is built by N104 and T154. K156 acts as the Proton acceptor in catalysis. K158 provides a ligand contact to substrate. Mg(2+) contacts are provided by K182, D184, and E185. N6-carboxylysine is present on K182. The Proton acceptor role is filled by H275. Substrate is bound by residues R276, H308, and S360.

Belongs to the RuBisCO large chain family. Type I subfamily. As to quaternary structure, heterohexadecamer of 8 large chains and 8 small chains; disulfide-linked. The disulfide link is formed within the large subunit homodimers. Requires Mg(2+) as cofactor. Post-translationally, the disulfide bond which can form in the large chain dimeric partners within the hexadecamer appears to be associated with oxidative stress and protein turnover.

The protein localises to the plastid. The protein resides in the chloroplast. The catalysed reaction is 2 (2R)-3-phosphoglycerate + 2 H(+) = D-ribulose 1,5-bisphosphate + CO2 + H2O. The enzyme catalyses D-ribulose 1,5-bisphosphate + O2 = 2-phosphoglycolate + (2R)-3-phosphoglycerate + 2 H(+). Functionally, ruBisCO catalyzes two reactions: the carboxylation of D-ribulose 1,5-bisphosphate, the primary event in carbon dioxide fixation, as well as the oxidative fragmentation of the pentose substrate in the photorespiration process. Both reactions occur simultaneously and in competition at the same active site. The protein is Ribulose bisphosphate carboxylase large chain of Euglena anabaena (Euglenaria anabaena).